The sequence spans 203 residues: Pacifastin-like protease inhibitor cvp4 (203 aa).

Residues 1–19 form the signal peptide; that stretch reads MGFLACALLVVATAHAATA. Pacifastin domains follow at residues 23–59, 85–121, and 147–184; these read PETCEIGSNFKNYCNNCYCFDGVMDHALCTRESCDRN, DEPCTPGENFKYYCNDCQCLDGLRAHAMCTRMRCDRN, and DESCAPGASFKYYCNSCTCGAEGKVAEAQCTSQECDRY. Intrachain disulfides connect Cys26-Cys41, Cys36-Cys56, Cys39-Cys51, Cys88-Cys103, Cys98-Cys118, and Cys101-Cys113. Positions 129 to 148 are enriched in basic and acidic residues; sequence RKYPEPEKWNSEKERKKSDE. Residues 129-150 are disordered; it reads RKYPEPEKWNSEKERKKSDESC. 3 cysteine pairs are disulfide-bonded: Cys150/Cys165, Cys160/Cys181, and Cys163/Cys176.

It belongs to the protease inhibitor I19 family. Expressed by the venom gland.

It is found in the secreted. In terms of biological role, inhibits trypsin activity and prophenoloxidase (PPO) activation, an enzyme essential for both clotting and insect innate immune responses. It does not inhibit activity of chymotrypsin and protease K, and has no effect on phenoloxidase (PO) activity. The protein is Pacifastin-like protease inhibitor cvp4 of Pimpla hypochondriaca (Parasitoid wasp).